Consider the following 110-residue polypeptide: MEYLRIAFLFALTALAEIVGCYLPWLVLRQAKSAWLLMPAALSLALFAWLLTLHPTAAGRTYAAYGGMYIAVALAWLRVVDGATLTRWDIGGAAIALAGMAVIALQPQPT.

The next 4 helical transmembrane spans lie at 8 to 28 (FLFA…WLVL), 33 to 53 (SAWL…LLTL), 63 to 83 (AAYG…VDGA), and 90 to 110 (IGGA…PQPT).

The protein belongs to the UPF0060 family.

It localises to the cell inner membrane. This Ralstonia nicotianae (strain ATCC BAA-1114 / GMI1000) (Ralstonia solanacearum) protein is UPF0060 membrane protein RSp1275.